The primary structure comprises 189 residues: Glycerol-3-phosphate acyltransferase (189 aa).

The next 5 helical transmembrane spans lie at 1–21, 51–71, 77–97, 111–131, and 151–171; these read MFWL…AILL, LAVL…LIAH, LQQQ…PLYF, MLLG…ALTF, and LLAW…LLIV.

It belongs to the PlsY family. In terms of assembly, probably interacts with PlsX.

It is found in the cell inner membrane. The catalysed reaction is an acyl phosphate + sn-glycerol 3-phosphate = a 1-acyl-sn-glycero-3-phosphate + phosphate. It participates in lipid metabolism; phospholipid metabolism. In terms of biological role, catalyzes the transfer of an acyl group from acyl-phosphate (acyl-PO(4)) to glycerol-3-phosphate (G3P) to form lysophosphatidic acid (LPA). This enzyme utilizes acyl-phosphate as fatty acyl donor, but not acyl-CoA or acyl-ACP. This is Glycerol-3-phosphate acyltransferase from Pseudomonas fluorescens (strain ATCC BAA-477 / NRRL B-23932 / Pf-5).